Reading from the N-terminus, the 116-residue chain is Ferredoxin (116 aa).

4Fe-4S ferredoxin-type domains follow at residues 2-31 (TYVVTDECVKCKYTDCVEVCPVDCFYEGER) and 35-64 (FMLVINPDECIDCGVCVPDCPIGAIKPESP). [3Fe-4S] cluster-binding residues include C9 and C17. Positions 21, 44, 47, and 50 each coordinate [4Fe-4S] cluster. C54 lines the [3Fe-4S] cluster pocket.

[4Fe-4S] cluster is required as a cofactor. [3Fe-4S] cluster serves as cofactor.

Its function is as follows. Ferredoxins are iron-sulfur proteins that transfer electrons in a wide variety of metabolic reactions. The sequence is that of Ferredoxin (fdxA) from Rickettsia conorii (strain ATCC VR-613 / Malish 7).